The sequence spans 239 residues: Ribonuclease 3 (239 aa).

The 124-residue stretch at 18–141 (YTTLEKALGY…LMAGVYLEAG (124 aa)) folds into the RNase III domain. Position 54 (E54) interacts with Mg(2+). D58 is a catalytic residue. S127 and E130 together coordinate Mg(2+). Residue E130 is part of the active site. The region spanning 168 to 237 (DYKTALQELT…AYQALQKLKE (70 aa)) is the DRBM domain.

Belongs to the ribonuclease III family. In terms of assembly, homodimer. Mg(2+) serves as cofactor.

It is found in the cytoplasm. The enzyme catalyses Endonucleolytic cleavage to 5'-phosphomonoester.. Digests double-stranded RNA. Involved in the processing of primary rRNA transcript to yield the immediate precursors to the large and small rRNAs (23S and 16S). Processes some mRNAs, and tRNAs when they are encoded in the rRNA operon. Processes pre-crRNA and tracrRNA of type II CRISPR loci if present in the organism. The protein is Ribonuclease 3 of Helicobacter pylori (strain ATCC 700392 / 26695) (Campylobacter pylori).